We begin with the raw amino-acid sequence, 153 residues long: uncharacterized protein (153 aa).

Residues 1–88 are disordered; that stretch reads MDKDRPGLPA…VPPPQLDHPG (88 aa).

This is an uncharacterized protein from Epstein-Barr virus (strain P3HR-1) (HHV-4).